The sequence spans 113 residues: Molt-inhibiting hormone (113 aa).

The first 35 residues, 1–35, serve as a signal peptide directing secretion; it reads MMSRTESRYSSQRTWLLSMVVLAALWSISVQRATA. 3 disulfides stabilise this stretch: cysteine 42–cysteine 79, cysteine 59–cysteine 75, and cysteine 62–cysteine 88.

Belongs to the arthropod CHH/MIH/GIH/VIH hormone family.

The protein localises to the secreted. Its function is as follows. Inhibits Y-organs where molting hormone (ecdysteroid) is secreted. A molting cycle is initiated when MIH secretion diminishes or stops. The protein is Molt-inhibiting hormone of Metacarcinus magister (Dungeness crab).